A 304-amino-acid polypeptide reads, in one-letter code: Myelin basic protein (304 aa).

Basic and acidic residues-rich tracts occupy residues 1–12 (MGNHAGKRELNA) and 22–32 (NRGESEKKRNL). The tract at residues 1–146 (MGNHAGKREL…QKRPSQRHGS (146 aa)) is disordered. Glycine 2 carries the N-acetylalanine modification. The segment covering 51–65 (ANQNNGTSSQDTAVT) has biased composition (polar residues). A compositionally biased stretch (basic and acidic residues) spans 95 to 113 (FSRDAPGREDNTFKDRPSE). Serine 96 bears the Phosphoserine mark. The span at 117–130 (LQTIQEDSAATSES) shows a compositional bias: polar residues. 2 positions are modified to phosphoserine: serine 141 and serine 146. Tyrosine 148 bears the Phosphotyrosine mark. Threonine 151 is subject to Phosphothreonine. Serine 153 carries the post-translational modification Phosphoserine. Threonine 154 bears the Phosphothreonine mark. Citrulline; in form C8 occurs at positions 159 and 165. Arginine 167 carries the citrulline modification. Threonine 169 is modified (phosphothreonine). Serine 174 is subject to Phosphoserine. Omega-N-methylarginine occurs at positions 177 and 183. The induces experimental autoimmune encephalomyelitis (EAE) 1 stretch occupies residues 179 to 222 (FGGDRGAPKRGSGKDSHHPARTAHYGSLPQKSHGRTQDENPVVH). The disordered stretch occupies residues 180 to 249 (GGDRGAPKRG…GRGLSLSRFS (70 aa)). Residue serine 190 is modified to Phosphoserine. Residue arginine 199 is modified to Citrulline. Position 203 is a phosphotyrosine (tyrosine 203). Serine 210 bears the Phosphoserine mark. Phosphothreonine occurs at positions 214 and 229. The residue at position 231 (arginine 231) is a Citrulline. Threonine 232 is modified (phosphothreonine). A Deamidated glutamine modification is found at glutamine 237. An Omega-N-methylarginine; alternate modification is found at arginine 241. Position 241 is a symmetric dimethylarginine; alternate (arginine 241). The segment at 246-256 (SRFSWGAEGQR) is induces experimental autoimmune encephalomyelitis (EAE) 2. The residue at position 249 (serine 249) is a Phosphoserine. 2 positions are modified to citrulline; in form C8: arginine 256 and arginine 264. The residue at position 281 (glutamine 281) is a Deamidated glutamine. Arginine 293 carries the citrulline; in form C8 modification. Position 295 is a phosphoserine (serine 295). The residue at position 296 (arginine 296) is a Citrulline. Serine 299 carries the post-translational modification Phosphoserine; by UHMK1. Arginine 303 carries the post-translational modification Citrulline. A Citrulline; in form C8 modification is found at arginine 304.

Belongs to the myelin basic protein family. Homodimer. Isoform 3 exists as a homodimer. Several charge isomers of MBP; C1 (the most cationic, least modified, and most abundant form), C2, C3, C4, C5, C6, C7, C8-A and C8-B (the least cationic form); are produced as a result of optional PTM, such as phosphorylation, deamidation of glutamine or asparagine, arginine citrullination and methylation. C8-A and C8-B contain each two mass isoforms termed C8-A(H), C8-A(L), C8-B(H) and C8-B(L), (H) standing for higher and (L) for lower molecular weight. C3, C4 and C5 are phosphorylated. The ratio of methylated arginine residues decreases during aging, making the protein more cationic. Post-translationally, the N-terminal alanine is acetylated (isoform 3, isoform 4, isoform 5 and isoform 6). In terms of processing, arg-241 was found to be 6% monomethylated and 60% symmetrically dimethylated. Proteolytically cleaved in B cell lysosomes by cathepsin CTSG which degrades the major immunogenic MBP epitope and prevents the activation of MBP-specific autoreactive T cells. Post-translationally, phosphorylated by TAOK2, VRK2, MAPK11, MAPK12, MAPK14 and MINK1. MBP isoforms are found in both the central and the peripheral nervous system, whereas Golli-MBP isoforms are expressed in fetal thymus, spleen and spinal cord, as well as in cell lines derived from the immune system.

It is found in the myelin membrane. The protein resides in the nucleus. The classic group of MBP isoforms (isoform 4-isoform 14) are with PLP the most abundant protein components of the myelin membrane in the CNS. They have a role in both its formation and stabilization. The smaller isoforms might have an important role in remyelination of denuded axons in multiple sclerosis. The non-classic group of MBP isoforms (isoform 1-isoform 3/Golli-MBPs) may preferentially have a role in the early developing brain long before myelination, maybe as components of transcriptional complexes, and may also be involved in signaling pathways in T-cells and neural cells. Differential splicing events combined with optional post-translational modifications give a wide spectrum of isomers, with each of them potentially having a specialized function. Induces T-cell proliferation. The protein is Myelin basic protein (MBP) of Homo sapiens (Human).